A 901-amino-acid polypeptide reads, in one-letter code: Mediator of RNA polymerase II transcription subunit 14 (901 aa).

This sequence belongs to the Mediator complex subunit 14 family. In terms of assembly, component of the Mediator complex.

It is found in the nucleus. Its function is as follows. Component of the Mediator complex, a coactivator involved in the regulated transcription of nearly all RNA polymerase II-dependent genes. Mediator functions as a bridge to convey information from gene-specific regulatory proteins to the basal RNA polymerase II transcription machinery. Mediator is recruited to promoters by direct interactions with regulatory proteins and serves as a scaffold for the assembly of a functional preinitiation complex with RNA polymerase II and the general transcription factors. In Yarrowia lipolytica (strain CLIB 122 / E 150) (Yeast), this protein is Mediator of RNA polymerase II transcription subunit 14 (RGR1).